The following is a 293-amino-acid chain: Phosphoribosylaminoimidazole-succinocarboxamide synthase (293 aa).

This sequence belongs to the SAICAR synthetase family.

The catalysed reaction is 5-amino-1-(5-phospho-D-ribosyl)imidazole-4-carboxylate + L-aspartate + ATP = (2S)-2-[5-amino-1-(5-phospho-beta-D-ribosyl)imidazole-4-carboxamido]succinate + ADP + phosphate + 2 H(+). It participates in purine metabolism; IMP biosynthesis via de novo pathway; 5-amino-1-(5-phospho-D-ribosyl)imidazole-4-carboxamide from 5-amino-1-(5-phospho-D-ribosyl)imidazole-4-carboxylate: step 1/2. The sequence is that of Phosphoribosylaminoimidazole-succinocarboxamide synthase from Bordetella petrii (strain ATCC BAA-461 / DSM 12804 / CCUG 43448).